Consider the following 518-residue polypeptide: Protein MGF 505-6R (518 aa).

ANK repeat units lie at residues 54–83, 129–158, 261–290, 292–322, and 324–351; these read SINDALLLAGEEGDTDVVQLLLLWEGNLHY, ECDFICLLQHAVKCDMLSILVKYKEDLLNV, SVNRALSYAVIDNKRKIIDYLVRHENIPRG, IERLLHLAVKKQSSRKTLNLLLSYINYKVKN, and KKLVEHVVDHNSTLVLKILLEKKENLVD.

Belongs to the asfivirus MGF 505 family.

Its function is as follows. Plays a role in virus cell tropism, and may be required for efficient virus replication in macrophages. The protein is Protein MGF 505-6R of Ornithodoros (relapsing fever ticks).